The following is a 101-amino-acid chain: Large ribosomal subunit protein uL24 (101 aa).

It belongs to the universal ribosomal protein uL24 family. As to quaternary structure, part of the 50S ribosomal subunit.

Its function is as follows. One of two assembly initiator proteins, it binds directly to the 5'-end of the 23S rRNA, where it nucleates assembly of the 50S subunit. One of the proteins that surrounds the polypeptide exit tunnel on the outside of the subunit. The sequence is that of Large ribosomal subunit protein uL24 from Ligilactobacillus salivarius (strain UCC118) (Lactobacillus salivarius).